A 397-amino-acid polypeptide reads, in one-letter code: Ethanolaminephosphotransferase 1 (397 aa).

Ala-2 bears the N-acetylalanine mark. The next 10 membrane-spanning stretches (helical) occupy residues 47-69, 84-103, 123-145, 150-172, 179-201, 221-243, 256-278, 291-310, 317-339, and 344-366; these read WLAPNLITFSGFLLVVFNFLLMA, HVPDWVWIVVGILNFVAYTL, LFDHGLDNWSYVYFVVTVYSIFG, GVSVFVLYLLLWVVLFSFILSHW, ILFLPWGYDISQVTISFVYIVTA, LFTAMIIGCALCVTLPMSLLNFF, VYEAMVPLFSPCLLFILSTAWIL, VFYFMVGTAFANSTCQLIVC, CPTLNWLLVPLFLVVLVVNLGVA, and SILLYTLTTAFTLAHIHYGVRVV. A non-standard amino acid (selenocysteine) is located at residue Sec-387.

It belongs to the CDP-alcohol phosphatidyltransferase class-I family. The cofactor is Mg(2+). Mn(2+) serves as cofactor.

The protein resides in the endoplasmic reticulum membrane. It carries out the reaction CDP-ethanolamine + a 1,2-diacyl-sn-glycerol = a 1,2-diacyl-sn-glycero-3-phosphoethanolamine + CMP + H(+). The enzyme catalyses 1-O-alkyl-2-acyl-sn-glycerol + CDP-ethanolamine = a 1-O-alkyl-2-acyl-sn-glycero-3-phosphoethanolamine + CMP + H(+). It functions in the pathway phospholipid metabolism; phosphatidylethanolamine biosynthesis; phosphatidylethanolamine from ethanolamine: step 3/3. Functionally, ethanolaminephosphotransferase that catalyzes the transfer of phosphoethanolamine (PE) from CDP-ethanolamine to lipid acceptors, the final step in the synthesis of PE via the 'Kennedy' pathway. PE is the second most abundant phospholipid of membranes in mammals and is involved in various membrane-related cellular processes. The enzyme is critical for the synthesis of several PE species and also catalyzes the synthesis of plasmanyl-PE, a lipid required for proper myelination and neurodevelopment, from 1-alkyl-2-acylglycerol. In Pongo abelii (Sumatran orangutan), this protein is Ethanolaminephosphotransferase 1.